The following is a 163-amino-acid chain: Nucleotide-binding protein APJL_1242 (163 aa).

Belongs to the YajQ family.

In terms of biological role, nucleotide-binding protein. This chain is Nucleotide-binding protein APJL_1242, found in Actinobacillus pleuropneumoniae serotype 3 (strain JL03).